The primary structure comprises 115 residues: Nascent polypeptide-associated complex protein (115 aa).

The 67-residue stretch at P6–I72 folds into the NAC-A/B domain.

The protein belongs to the NAC-alpha family. Homodimer. Interacts with the ribosome. Binds ribosomal RNA.

Its function is as follows. Contacts the emerging nascent chain on the ribosome. This chain is Nascent polypeptide-associated complex protein, found in Pyrococcus horikoshii (strain ATCC 700860 / DSM 12428 / JCM 9974 / NBRC 100139 / OT-3).